The primary structure comprises 398 residues: Ornithine aminotransferase (398 aa).

Lys255 carries the N6-(pyridoxal phosphate)lysine modification.

This sequence belongs to the class-III pyridoxal-phosphate-dependent aminotransferase family. OAT subfamily. Pyridoxal 5'-phosphate serves as cofactor.

Its subcellular location is the cytoplasm. It catalyses the reaction a 2-oxocarboxylate + L-ornithine = L-glutamate 5-semialdehyde + an L-alpha-amino acid. The protein operates within amino-acid biosynthesis; L-proline biosynthesis; L-glutamate 5-semialdehyde from L-ornithine: step 1/1. Catalyzes the interconversion of ornithine to glutamate semialdehyde. The chain is Ornithine aminotransferase from Geobacillus sp. (strain WCH70).